The primary structure comprises 185 residues: NOP protein chaperone 1 (185 aa).

Residues S34, S66, and S177 each carry the phosphoserine modification. Positions 121 to 185 (SRSDSKEEDS…DSPASKKKKQ (65 aa)) are disordered.

Interacts with NOP58, RUVBL1 and RUVBL2; the interactions are direct and NOPCHAP1 bridges the association of NOP58 with RUVBL1:RUVBL2 even in absence of snoRNAs. The interactions with RUVBL1 and RUVBL2 are disrupted upon ATP binding.

It localises to the nucleus. Client-loading PAQosome/R2TP complex cofactor that selects NOP58 to promote box C/D small nucleolar ribonucleoprotein (snoRNP) assembly. Acts as a bridge between NOP58 and the R2TP complex via RUVBL1:RUVBL2. This Mus musculus (Mouse) protein is NOP protein chaperone 1.